Reading from the N-terminus, the 863-residue chain is Desmocollin-2 (863 aa).

The propeptide occupies 1–89 (KFIGRVNLKE…QEKVLRRAKR (89 aa)). Cadherin domains are found at residues 90 to 197 (RWAP…APIF), 198 to 309 (TETS…LPTF), 310 to 423 (TRSS…GPEC), 424 to 528 (DPRV…VIPQ), and 529 to 644 (RTVV…ILGK). Topologically, residues 90 to 644 (RWAPIPCSVP…TGNREVILGK (555 aa)) are extracellular. N120 is a glycosylation site (N-linked (GlcNAc...) asparagine). N-linked (GlcNAc...) asparagine glycosylation is found at N346, N495, and N579. The chain crosses the membrane as a helical span at residues 645-665 (WAILAILLGIALLFCILFTLV). Residues 666-863 (CGATTGADKK…RTLAETCMKR (198 aa)) lie on the Cytoplasmic side of the membrane. A phosphoserine mark is found at S826, S830, and S835.

Interacts with DSP, PKP2 and JUP. Interacts with DSG3; the interaction may limit the interaction of DSC3 with p38MAPK family members and therefore repress p38MAPK signaling activation. As to expression, expressed in esophagus and rumen. Weakly expressed in epithelia and cardiac muscle.

The protein localises to the cell membrane. Its subcellular location is the cell junction. It is found in the desmosome. Functionally, a component of desmosome cell-cell junctions which are required for positive regulation of cellular adhesion. Promotes timely incorporation of DSG2 into desmosome intercellular junctions and promotes interaction of desmosome cell junctions with intermediate filament cytokeratin, via modulation of DSP phosphorylation. Plays an important role in desmosome-mediated maintenance of intestinal epithelial cell intercellular adhesion strength and barrier function. Positively regulates wound healing of intestinal mucosa via promotion of epithelial cell migration, and also plays a role in mechanotransduction of force between intestinal epithelial cells and extracellular matrix. May contribute to epidermal cell positioning (stratification) by mediating differential adhesiveness between cells that express different isoforms. The sequence is that of Desmocollin-2 (DSC2) from Bos taurus (Bovine).